The sequence spans 445 residues: Argininosuccinate synthase (445 aa).

Residues 17–25 (AFSGGLDTS) and A43 each bind ATP. An L-citrulline-binding site is contributed by Y99. ATP contacts are provided by G129 and T131. The L-aspartate site is built by T131, N135, and D136. N135 provides a ligand contact to L-citrulline. D136 is a binding site for ATP. 2 residues coordinate L-citrulline: R139 and S192. D194 contacts ATP. L-citrulline is bound by residues T201, E203, and E280.

This sequence belongs to the argininosuccinate synthase family. Type 2 subfamily. As to quaternary structure, homotetramer.

The protein resides in the cytoplasm. The enzyme catalyses L-citrulline + L-aspartate + ATP = 2-(N(omega)-L-arginino)succinate + AMP + diphosphate + H(+). Its pathway is amino-acid biosynthesis; L-arginine biosynthesis; L-arginine from L-ornithine and carbamoyl phosphate: step 2/3. This chain is Argininosuccinate synthase, found in Bordetella bronchiseptica (strain ATCC BAA-588 / NCTC 13252 / RB50) (Alcaligenes bronchisepticus).